We begin with the raw amino-acid sequence, 197 residues long: dITP/XTP pyrophosphatase (197 aa).

A substrate-binding site is contributed by 8-13 (TGNVGK). Mg(2+) is bound by residues glutamate 40 and aspartate 69. Aspartate 69 acts as the Proton acceptor in catalysis. Substrate-binding positions include serine 70, 154–157 (FGYD), lysine 177, and 182–183 (HR).

This sequence belongs to the HAM1 NTPase family. As to quaternary structure, homodimer. Requires Mg(2+) as cofactor. Mn(2+) serves as cofactor. It depends on Ni(2+) as a cofactor.

It carries out the reaction XTP + H2O = XMP + diphosphate + H(+). It catalyses the reaction dITP + H2O = dIMP + diphosphate + H(+). The enzyme catalyses ITP + H2O = IMP + diphosphate + H(+). Its function is as follows. Pyrophosphatase that catalyzes the hydrolysis of nucleoside triphosphates to their monophosphate derivatives, with a high preference for the non-canonical purine nucleotides XTP (xanthosine triphosphate), dITP (deoxyinosine triphosphate) and ITP. Can also efficiently hydrolyze 2'-deoxy-N-6-hydroxylaminopurine triphosphate (dHAPTP). Seems to function as a house-cleaning enzyme that removes non-canonical purine nucleotides from the nucleotide pool, thus preventing their incorporation into DNA/RNA and avoiding chromosomal lesions. To a much lesser extent, is also able to hydrolyze GTP, dGTP and dUTP, but shows very low activity toward the canonical nucleotides dATP, dCTP and dTTP and toward 8-oxo-dGTP, purine deoxyribose triphosphate, 2-aminopurine deoxyribose triphosphate and 2,6-diaminopurine deoxyribose triphosphate. Functionally, genetic interactions among priB, dam, lexA, nagC, polA, rdgB, rdgB, rep and uup link the PriA-PriB replication restart pathway to DNA double-strand break repair. This is dITP/XTP pyrophosphatase from Escherichia coli (strain K12).